The following is a 406-amino-acid chain: Cysteine desulfurase (406 aa).

Position 226 is an N6-(pyridoxal phosphate)lysine (K226). The Cysteine persulfide intermediate role is filled by C364.

The protein belongs to the class-V pyridoxal-phosphate-dependent aminotransferase family. Csd subfamily. As to quaternary structure, homodimer. Interacts with SufE and the SufBCD complex composed of SufB, SufC and SufD. The interaction with SufE is required to mediate the direct transfer of the sulfur atom from the S-sulfanylcysteine. Pyridoxal 5'-phosphate is required as a cofactor.

The protein resides in the cytoplasm. It carries out the reaction (sulfur carrier)-H + L-cysteine = (sulfur carrier)-SH + L-alanine. The catalysed reaction is L-selenocysteine + AH2 = hydrogenselenide + L-alanine + A + H(+). It functions in the pathway cofactor biosynthesis; iron-sulfur cluster biosynthesis. In terms of biological role, cysteine desulfurases mobilize the sulfur from L-cysteine to yield L-alanine, an essential step in sulfur metabolism for biosynthesis of a variety of sulfur-containing biomolecules. Component of the suf operon, which is activated and required under specific conditions such as oxidative stress and iron limitation. Acts as a potent selenocysteine lyase in vitro, that mobilizes selenium from L-selenocysteine. Selenocysteine lyase activity is however unsure in vivo. The protein is Cysteine desulfurase of Escherichia coli O157:H7 (strain EC4115 / EHEC).